Reading from the N-terminus, the 165-residue chain is Peptide deformylase (165 aa).

Fe cation contacts are provided by Cys-93 and His-135. Glu-136 is a catalytic residue. His-139 serves as a coordination point for Fe cation.

The protein belongs to the polypeptide deformylase family. The cofactor is Fe(2+).

The enzyme catalyses N-terminal N-formyl-L-methionyl-[peptide] + H2O = N-terminal L-methionyl-[peptide] + formate. Functionally, removes the formyl group from the N-terminal Met of newly synthesized proteins. Requires at least a dipeptide for an efficient rate of reaction. N-terminal L-methionine is a prerequisite for activity but the enzyme has broad specificity at other positions. The sequence is that of Peptide deformylase from Thermodesulfovibrio yellowstonii (strain ATCC 51303 / DSM 11347 / YP87).